The chain runs to 397 residues: Mannonate dehydratase (397 aa).

Belongs to the mannonate dehydratase family. Fe(2+) serves as cofactor. It depends on Mn(2+) as a cofactor.

It catalyses the reaction D-mannonate = 2-dehydro-3-deoxy-D-gluconate + H2O. It participates in carbohydrate metabolism; pentose and glucuronate interconversion. In terms of biological role, catalyzes the dehydration of D-mannonate. The polypeptide is Mannonate dehydratase (Yersinia pestis bv. Antiqua (strain Antiqua)).